Reading from the N-terminus, the 325-residue chain is uncharacterized protein (325 aa).

A chloroplast-targeting transit peptide spans M1–S69. N-acetylalanine is present on A70.

The protein belongs to the NAD(P)-dependent epimerase/dehydratase family.

It is found in the plastid. Its subcellular location is the chloroplast. This is an uncharacterized protein from Arabidopsis thaliana (Mouse-ear cress).